The sequence spans 388 residues: 1-deoxy-D-xylulose 5-phosphate reductoisomerase (388 aa).

The NADPH site is built by Thr-10, Gly-11, Ser-12, Ile-13, Lys-37, Asn-38, and Asn-123. Residue Lys-124 coordinates 1-deoxy-D-xylulose 5-phosphate. Position 125 (Glu-125) interacts with NADPH. Asp-149 provides a ligand contact to Mn(2+). 4 residues coordinate 1-deoxy-D-xylulose 5-phosphate: Ser-150, Glu-151, Ser-175, and His-198. Mn(2+) is bound at residue Glu-151. Residue Gly-204 participates in NADPH binding. 1-deoxy-D-xylulose 5-phosphate-binding residues include Ser-211, Asn-216, Lys-217, and Glu-220. Mn(2+) is bound at residue Glu-220.

Belongs to the DXR family. Mg(2+) is required as a cofactor. The cofactor is Mn(2+).

It carries out the reaction 2-C-methyl-D-erythritol 4-phosphate + NADP(+) = 1-deoxy-D-xylulose 5-phosphate + NADPH + H(+). Its pathway is isoprenoid biosynthesis; isopentenyl diphosphate biosynthesis via DXP pathway; isopentenyl diphosphate from 1-deoxy-D-xylulose 5-phosphate: step 1/6. Functionally, catalyzes the NADPH-dependent rearrangement and reduction of 1-deoxy-D-xylulose-5-phosphate (DXP) to 2-C-methyl-D-erythritol 4-phosphate (MEP). This Pelagibacter ubique (strain HTCC1062) protein is 1-deoxy-D-xylulose 5-phosphate reductoisomerase.